The following is a 326-amino-acid chain: Flap endonuclease 1 (326 aa).

The interval 1-100 (MGNAALRQLA…EEVQERRVAR (100 aa)) is N-domain. Mg(2+) is bound by residues D28, D82, E154, E156, D175, D177, and D225. Residues 118–246 (AASRLEARTQ…TAISAINDHG (129 aa)) are I-domain. Positions 318–326 (VQTGLDEWI) are interaction with PCNA.

Belongs to the XPG/RAD2 endonuclease family. FEN1 subfamily. As to quaternary structure, interacts with PCNA. PCNA stimulates the nuclease activity without altering cleavage specificity. Requires Mg(2+) as cofactor.

Its function is as follows. Structure-specific nuclease with 5'-flap endonuclease and 5'-3' exonuclease activities involved in DNA replication and repair. During DNA replication, cleaves the 5'-overhanging flap structure that is generated by displacement synthesis when DNA polymerase encounters the 5'-end of a downstream Okazaki fragment. Binds the unpaired 3'-DNA end and kinks the DNA to facilitate 5' cleavage specificity. Cleaves one nucleotide into the double-stranded DNA from the junction in flap DNA, leaving a nick for ligation. Also involved in the base excision repair (BER) pathway. Acts as a genome stabilization factor that prevents flaps from equilibrating into structures that lead to duplications and deletions. Also possesses 5'-3' exonuclease activity on nicked or gapped double-stranded DNA. This is Flap endonuclease 1 from Haloquadratum walsbyi (strain DSM 16790 / HBSQ001).